We begin with the raw amino-acid sequence, 941 residues long: Endoglucanase (941 aa).

Positions 1–29 are cleaved as a signal peptide; that stretch reads MKIKQIKQSLSLLLIITLIMSLFVPMASA. SLH domains lie at 37 to 94, 95 to 158, and 161 to 224; these read NAFP…GLEA, SSKD…LSLP, and QREY…DYLY. Glu373 acts as the Proton donor in catalysis. Glu485 functions as the Nucleophile in the catalytic mechanism.

Belongs to the glycosyl hydrolase 5 (cellulase A) family.

It catalyses the reaction Endohydrolysis of (1-&gt;4)-beta-D-glucosidic linkages in cellulose, lichenin and cereal beta-D-glucans.. The polypeptide is Endoglucanase (Bacillus sp. (strain KSM-635)).